The following is a 261-amino-acid chain: Phosphatidylglycerol--prolipoprotein diacylglyceryl transferase (261 aa).

4 consecutive transmembrane segments (helical) span residues 17-37 (FAIH…LLLG), 59-79 (LLFA…TLFY), 94-114 (IWEG…ALLW), and 121-141 (TSFF…LAFG). Arg142 serves as a coordination point for a 1,2-diacyl-sn-glycero-3-phospho-(1'-sn-glycerol). Helical transmembrane passes span 174–194 (PSQI…LWIY) and 228–248 (FLGL…PMII).

It belongs to the Lgt family.

The protein localises to the cell inner membrane. It carries out the reaction L-cysteinyl-[prolipoprotein] + a 1,2-diacyl-sn-glycero-3-phospho-(1'-sn-glycerol) = an S-1,2-diacyl-sn-glyceryl-L-cysteinyl-[prolipoprotein] + sn-glycerol 1-phosphate + H(+). The protein operates within protein modification; lipoprotein biosynthesis (diacylglyceryl transfer). In terms of biological role, catalyzes the transfer of the diacylglyceryl group from phosphatidylglycerol to the sulfhydryl group of the N-terminal cysteine of a prolipoprotein, the first step in the formation of mature lipoproteins. The polypeptide is Phosphatidylglycerol--prolipoprotein diacylglyceryl transferase (Polynucleobacter asymbioticus (strain DSM 18221 / CIP 109841 / QLW-P1DMWA-1) (Polynucleobacter necessarius subsp. asymbioticus)).